The chain runs to 530 residues: Hyccin 2 (530 aa).

Phosphothreonine occurs at positions 30 and 306. Phosphoserine is present on residues Ser321 and Ser341. The segment at 328-410 is disordered; it reads RREGAEGVNG…DSVVRKQYVQ (83 aa). Residues 353–373 are compositionally biased toward polar residues; it reads SGASLSSQPIGTKPSSSSQRG. 4 positions are modified to phosphoserine: Ser430, Ser442, Ser444, and Ser491. Positions 498 to 530 are disordered; sequence GQAGEGKELLSPGAPLTKQSRSPSFNMQLISQV. Residues 514-530 show a composition bias toward polar residues; sequence TKQSRSPSFNMQLISQV.

It belongs to the Hyccin family. As to quaternary structure, component of a phosphatidylinositol 4-kinase (PI4K) complex, composed of PI4KA, EFR3 (EFR3A or EFR3B), TTC7 (TTC7A or TTC7B) and HYCC (HYCC1 or HYCC2).

Its subcellular location is the cytoplasm. It is found in the cytosol. The protein localises to the cell membrane. In terms of biological role, component of a complex required to localize phosphatidylinositol 4-kinase (PI4K) to the plasma membrane. This is Hyccin 2 (HYCC2) from Pongo abelii (Sumatran orangutan).